Here is a 133-residue protein sequence, read N- to C-terminus: DNA-directed RNA polymerases I and III subunit RPAC2 (133 aa).

Position 1 is an N-acetylmethionine (Met1).

The protein belongs to the archaeal Rpo11/eukaryotic RPB11/RPC19 RNA polymerase subunit family. In terms of assembly, component of the RNA polymerase I and RNA polymerase III complexes consisting of at least 13 and 17 subunits, respectively. Pol I complex consists of a ten-subunit catalytic core composed of POLR1A/RPA1, POLR1B/RPA2, POLR1C/RPAC1, POLR1D/RPAC2, POLR1H/RPA12, POLR2E/RPABC1, POLR2F/RPABC2, POLR2H/RPABC3, POLR2K/RPABC4 and POLR2L/RPABC5; a mobile stalk subunit POLR1F/RPA43 protruding from the core and additional subunits homologous to general transcription factors POLR1E/RPA49 and POLR1G/RPA34. Part of Pol I pre-initiation complex (PIC), in which Pol I core assembles with RRN3 and promoter-bound UTBF and SL1/TIF-IB complex. Pol III complex consists of a ten-subunit catalytic core composed of POLR3A/RPC1, POLR3B/RPC2, POLR1C/RPAC1, POLR1D/RPAC2, POLR3K/RPC10, POLR2E/RPABC1, POLR2F/RPABC2, POLR2H/RPABC3, POLR2K/RPABC4 and POLR2L/RPABC5; a mobile stalk composed of two subunits POLR3H/RPC8 and CRCP/RPC9, protruding from the core and functioning primarily in transcription initiation; and additional subunits homologous to general transcription factors of the RNA polymerase II machinery, POLR3C/RPC3-POLR3F/RPC6-POLR3G/RPC7 heterotrimer required for transcription initiation and POLR3D/RPC4-POLR3E/RPC5 heterodimer involved in both transcription initiation and termination.

It is found in the nucleus. Its subcellular location is the nucleolus. Functionally, DNA-dependent RNA polymerase catalyzes the transcription of DNA into RNA using the four ribonucleoside triphosphates as substrates. Common component of RNA polymerases I and III which synthesize ribosomal RNA precursors and short non-coding RNAs including 5S rRNA, snRNAs, tRNAs and miRNAs, respectively. The chain is DNA-directed RNA polymerases I and III subunit RPAC2 from Homo sapiens (Human).